A 347-amino-acid polypeptide reads, in one-letter code: Probable dual-specificity RNA methyltransferase RlmN (347 aa).

Glu-94 (proton acceptor) is an active-site residue. The region spanning 100–334 (TETRTTACVS…AKVRHSRGKD (235 aa)) is the Radical SAM core domain. An intrachain disulfide couples Cys-107 to Cys-339. Residues Cys-114, Cys-118, and Cys-121 each coordinate [4Fe-4S] cluster. S-adenosyl-L-methionine-binding positions include 165–166 (GE), Ser-197, 220–222 (SLH), and Asn-296. Cys-339 functions as the S-methylcysteine intermediate in the catalytic mechanism.

This sequence belongs to the radical SAM superfamily. RlmN family. It depends on [4Fe-4S] cluster as a cofactor.

Its subcellular location is the cytoplasm. It catalyses the reaction adenosine(2503) in 23S rRNA + 2 reduced [2Fe-2S]-[ferredoxin] + 2 S-adenosyl-L-methionine = 2-methyladenosine(2503) in 23S rRNA + 5'-deoxyadenosine + L-methionine + 2 oxidized [2Fe-2S]-[ferredoxin] + S-adenosyl-L-homocysteine. The catalysed reaction is adenosine(37) in tRNA + 2 reduced [2Fe-2S]-[ferredoxin] + 2 S-adenosyl-L-methionine = 2-methyladenosine(37) in tRNA + 5'-deoxyadenosine + L-methionine + 2 oxidized [2Fe-2S]-[ferredoxin] + S-adenosyl-L-homocysteine. Its function is as follows. Specifically methylates position 2 of adenine 2503 in 23S rRNA and position 2 of adenine 37 in tRNAs. The chain is Probable dual-specificity RNA methyltransferase RlmN from Flavobacterium psychrophilum (strain ATCC 49511 / DSM 21280 / CIP 103535 / JIP02/86).